We begin with the raw amino-acid sequence, 346 residues long: MQQEKELVKQKAKELLLDLLSIYTPSKNETNATKFFEKISNEFNLKLEILPDSNSFILGEGEILLASHVDTVPGYIEPKIENEVIYGRGAVDAKGPLISMIIAAWLLNEKGIKVMVSGLADEESTSIGAKELTLKNFNFKHIIVGEPSNGTDIVVEYRGSIQLDIMCESTPEHSSSAKSNLIVDISKKIIEVYKQPENYDKPSIVPTIIRAGESYNVTPAKLYLHFDVRYAINNKRDDLINEIKDKFQECGLKIVDETPPVKVSINNPVVKSLTRALLKQNIKPRLVRKAGTSDMNILQKITTSIATYGPGNSMLEHTNQEKITFDEIYIGVKTYMLAIEELWQKS.

His68 provides a ligand contact to Zn(2+). Asp70 is an active-site residue. Asp92 is a binding site for Zn(2+). Residue Glu122 is the Proton acceptor of the active site. Zn(2+) is bound by residues Glu123, Glu146, and His317.

The protein belongs to the peptidase M20A family. LysK subfamily. Zn(2+) serves as cofactor. It depends on Co(2+) as a cofactor.

Its subcellular location is the cytoplasm. It carries out the reaction [amino-group carrier protein]-C-terminal-gamma-(L-lysyl)-L-glutamate + H2O = [amino-group carrier protein]-C-terminal-L-glutamate + L-lysine. It catalyses the reaction [amino-group carrier protein]-C-terminal-gamma-(L-ornithyl)-L-glutamate + H2O = [amino-group carrier protein]-C-terminal-L-glutamate + L-ornithine. The protein operates within amino-acid biosynthesis; L-lysine biosynthesis via AAA pathway; L-lysine from L-alpha-aminoadipate (Thermus route): step 5/5. It functions in the pathway amino-acid biosynthesis; L-arginine biosynthesis. In terms of biological role, catalyzes the release of L-lysine from [LysW]-gamma-L-lysine and the release of L-ornithine from [LysW]-L-ornithine. This chain is [LysW]-lysine/[LysW]-ornithine hydrolase, found in Saccharolobus islandicus (strain M.16.27) (Sulfolobus islandicus).